A 185-amino-acid chain; its full sequence is Guanylate kinase (185 aa).

The Guanylate kinase-like domain maps to 3-181 (TRMIIVAAPS…SYGEFKKIVE (179 aa)). 10–17 (APSGAGKS) lines the ATP pocket.

It belongs to the guanylate kinase family.

Its subcellular location is the cytoplasm. It catalyses the reaction GMP + ATP = GDP + ADP. Its function is as follows. Essential for recycling GMP and indirectly, cGMP. The sequence is that of Guanylate kinase from Bdellovibrio bacteriovorus (strain ATCC 15356 / DSM 50701 / NCIMB 9529 / HD100).